A 286-amino-acid chain; its full sequence is Phosphatidylglycerol--prolipoprotein diacylglyceryl transferase (286 aa).

Helical transmembrane passes span 24-44, 72-92, 104-124, 140-160, 190-210, 218-238, and 253-273; these read IGPL…LFAW, FIVW…VLFY, IFAV…VILA, FDVV…ANFI, LYEA…LTHS, RFVG…VEFF, and WLTM…WAMA. Position 155 (Arg-155) interacts with a 1,2-diacyl-sn-glycero-3-phospho-(1'-sn-glycerol).

Belongs to the Lgt family.

The protein localises to the cell inner membrane. The enzyme catalyses L-cysteinyl-[prolipoprotein] + a 1,2-diacyl-sn-glycero-3-phospho-(1'-sn-glycerol) = an S-1,2-diacyl-sn-glyceryl-L-cysteinyl-[prolipoprotein] + sn-glycerol 1-phosphate + H(+). It participates in protein modification; lipoprotein biosynthesis (diacylglyceryl transfer). In terms of biological role, catalyzes the transfer of the diacylglyceryl group from phosphatidylglycerol to the sulfhydryl group of the N-terminal cysteine of a prolipoprotein, the first step in the formation of mature lipoproteins. The protein is Phosphatidylglycerol--prolipoprotein diacylglyceryl transferase of Mesorhizobium japonicum (strain LMG 29417 / CECT 9101 / MAFF 303099) (Mesorhizobium loti (strain MAFF 303099)).